The following is a 345-amino-acid chain: Aspartate-semialdehyde dehydrogenase (345 aa).

NADP(+) is bound by residues 11-14 (TGQV) and 39-40 (RS). Phosphate is bound at residue Arg-99. The active-site Acyl-thioester intermediate is the Cys-130. Gln-157 serves as a coordination point for substrate. 160-161 (SG) contributes to the NADP(+) binding site. Phosphate is bound at residue Lys-227. Arg-249 contacts substrate. Catalysis depends on His-256, which acts as the Proton acceptor. Asn-325 is an NADP(+) binding site.

It belongs to the aspartate-semialdehyde dehydrogenase family. Homodimer.

It catalyses the reaction L-aspartate 4-semialdehyde + phosphate + NADP(+) = 4-phospho-L-aspartate + NADPH + H(+). Its pathway is amino-acid biosynthesis; L-lysine biosynthesis via DAP pathway; (S)-tetrahydrodipicolinate from L-aspartate: step 2/4. The protein operates within amino-acid biosynthesis; L-methionine biosynthesis via de novo pathway; L-homoserine from L-aspartate: step 2/3. It participates in amino-acid biosynthesis; L-threonine biosynthesis; L-threonine from L-aspartate: step 2/5. Its function is as follows. Catalyzes the NADPH-dependent formation of L-aspartate-semialdehyde (L-ASA) by the reductive dephosphorylation of L-aspartyl-4-phosphate. The protein is Aspartate-semialdehyde dehydrogenase of Mycobacterium bovis (strain ATCC BAA-935 / AF2122/97).